An 802-amino-acid polypeptide reads, in one-letter code: G-type lectin S-receptor-like serine/threonine-protein kinase At1g61550 (802 aa).

The signal sequence occupies residues 1 to 19; it reads MTRFACFLFSTLLLSFSYA. In terms of domain architecture, Bulb-type lectin spans 20 to 139; that stretch reads AITPTSPLSI…VSGITLWQSF (120 aa). Residues 20–421 lie on the Extracellular side of the membrane; that stretch reads AITPTSPLSI…EMGGNQRKKT (402 aa). N-linked (GlcNAc...) asparagine glycans are attached at residues N48, N89, N112, N231, and N262. An EGF-like domain is found at 273–309; that stretch reads PANTCDFYGVCGPFGLCVMSIPPKCKCFKGFVPQFSE. 2 cysteine pairs are disulfide-bonded: C277/C289 and C283/C297. N315, N331, and N370 each carry an N-linked (GlcNAc...) asparagine glycan. The PAN domain maps to 328-410; it reads CQGNSTGRHV…GELLSIRLAS (83 aa). Disulfide bonds link C363-C384 and C367-C373. A helical transmembrane segment spans residues 422 to 442; the sequence is IIASIVSISLFVTLASAAFGF. Over 443-802 the chain is Cytoplasmic; that stretch reads WRYRLKHNAI…EVTQSVVLGR (360 aa). One can recognise a Protein kinase domain in the interval 489 to 774; the sequence is FSLVNKLGQG…DLPLPKEPTF (286 aa). Residues 495–503 and K517 contribute to the ATP site; that span reads LGQGGFGPV. Phosphoserine occurs at positions 523 and 538. Positions 578 to 595 are caM-binding; sequence RKRVEIDWPKRFSIIQGI. D614 functions as the Proton acceptor in the catalytic mechanism. A phosphoserine mark is found at S618 and S631. At T648 the chain carries Phosphothreonine. At S691 the chain carries Phosphoserine.

The protein belongs to the protein kinase superfamily. Ser/Thr protein kinase family.

Its subcellular location is the cell membrane. The enzyme catalyses L-seryl-[protein] + ATP = O-phospho-L-seryl-[protein] + ADP + H(+). It carries out the reaction L-threonyl-[protein] + ATP = O-phospho-L-threonyl-[protein] + ADP + H(+). This chain is G-type lectin S-receptor-like serine/threonine-protein kinase At1g61550, found in Arabidopsis thaliana (Mouse-ear cress).